A 78-amino-acid polypeptide reads, in one-letter code: Probable cytochrome c oxidase subunit 6B (78 aa).

The CHCH domain occupies 21 to 64; that stretch reads TKHCWANYVDYYGCVKHYNGDNSKCQTFFNSMNSLCPAAWISEW. Residues 24–34 carry the Cx9C motif motif; sequence CWANYVDYYGC. 2 cysteine pairs are disulfide-bonded: Cys-24–Cys-56 and Cys-34–Cys-45. A Cx10C motif motif is present at residues 45-56; sequence CQTFFNSMNSLC.

It belongs to the cytochrome c oxidase subunit 6B family. Component of the cytochrome c oxidase (complex IV, CIV), a multisubunit enzyme composed of a catalytic core of 3 subunits and several supernumerary subunits. The complex exists as a monomer or a dimer and forms supercomplexes (SCs) in the inner mitochondrial membrane with ubiquinol-cytochrome c oxidoreductase (cytochrome b-c1 complex, complex III, CIII).

It localises to the mitochondrion inner membrane. It participates in energy metabolism; oxidative phosphorylation. Its function is as follows. Component of the cytochrome c oxidase, the last enzyme in the mitochondrial electron transport chain which drives oxidative phosphorylation. The respiratory chain contains 3 multisubunit complexes succinate dehydrogenase (complex II, CII), ubiquinol-cytochrome c oxidoreductase (cytochrome b-c1 complex, complex III, CIII) and cytochrome c oxidase (complex IV, CIV), that cooperate to transfer electrons derived from NADH and succinate to molecular oxygen, creating an electrochemical gradient over the inner membrane that drives transmembrane transport and the ATP synthase. Cytochrome c oxidase is the component of the respiratory chain that catalyzes the reduction of oxygen to water. Electrons originating from reduced cytochrome c in the intermembrane space (IMS) are transferred via the dinuclear copper A center (CU(A)) of subunit 2 and heme A of subunit 1 to the active site in subunit 1, a binuclear center (BNC) formed by heme A3 and copper B (CU(B)). The BNC reduces molecular oxygen to 2 water molecules using 4 electrons from cytochrome c in the IMS and 4 protons from the mitochondrial matrix. The chain is Probable cytochrome c oxidase subunit 6B from Dictyostelium discoideum (Social amoeba).